A 252-amino-acid chain; its full sequence is Ubiquinone biosynthesis protein COQ4 homolog 2, mitochondrial (252 aa).

Zn(2+)-binding residues include histidine 130, aspartate 131, histidine 134, and glutamate 146.

It belongs to the COQ4 family. In terms of assembly, component of a multi-subunit COQ enzyme complex. Requires Zn(2+) as cofactor.

It is found in the mitochondrion inner membrane. The enzyme catalyses a 4-hydroxy-3-methoxy-5-(all-trans-polyprenyl)benzoate + H(+) = a 2-methoxy-6-(all-trans-polyprenyl)phenol + CO2. It participates in cofactor biosynthesis; ubiquinone biosynthesis. Lyase that catalyzes the C1-decarboxylation of 4-hydroxy-3-methoxy-5-(all-trans-polyprenyl)benzoic acid into 2-methoxy-6-(all-trans-polyprenyl)phenol during ubiquinone biosynthesis. This is Ubiquinone biosynthesis protein COQ4 homolog 2, mitochondrial from Trypanosoma cruzi (strain CL Brener).